The sequence spans 25 residues: ATP-dependent 6-phosphofructokinase 2 (25 aa).

Residue Gly-11 participates in ATP binding.

This sequence belongs to the phosphofructokinase type A (PFKA) family. ATP-dependent PFK group I subfamily. Prokaryotic clade 'B1' sub-subfamily. As to quaternary structure, homotetramer. Mg(2+) serves as cofactor.

It localises to the cytoplasm. The enzyme catalyses beta-D-fructose 6-phosphate + ATP = beta-D-fructose 1,6-bisphosphate + ADP + H(+). It functions in the pathway carbohydrate degradation; glycolysis; D-glyceraldehyde 3-phosphate and glycerone phosphate from D-glucose: step 3/4. With respect to regulation, in contrast with PFK1 this enzyme is not affected by phosphoenolpyruvate. Its function is as follows. Catalyzes the phosphorylation of D-fructose 6-phosphate to fructose 1,6-bisphosphate by ATP, the first committing step of glycolysis. In Thermus thermophilus (strain ATCC 27634 / DSM 579 / HB8), this protein is ATP-dependent 6-phosphofructokinase 2 (pfkA2).